The following is a 255-amino-acid chain: 3-deoxy-manno-octulosonate cytidylyltransferase (255 aa).

Belongs to the KdsB family.

It localises to the cytoplasm. The enzyme catalyses 3-deoxy-alpha-D-manno-oct-2-ulosonate + CTP = CMP-3-deoxy-beta-D-manno-octulosonate + diphosphate. Its pathway is nucleotide-sugar biosynthesis; CMP-3-deoxy-D-manno-octulosonate biosynthesis; CMP-3-deoxy-D-manno-octulosonate from 3-deoxy-D-manno-octulosonate and CTP: step 1/1. It functions in the pathway bacterial outer membrane biogenesis; lipopolysaccharide biosynthesis. Its function is as follows. Activates KDO (a required 8-carbon sugar) for incorporation into bacterial lipopolysaccharide in Gram-negative bacteria. In Saccharophagus degradans (strain 2-40 / ATCC 43961 / DSM 17024), this protein is 3-deoxy-manno-octulosonate cytidylyltransferase.